The chain runs to 2245 residues: Basic helix-loop-helix domain-containing protein USF3 (2245 aa).

The interval 1–28 (MPEMTENETPTKKQHRKKNRETHNAVER) is disordered. The bHLH domain maps to 18–69 (KNRETHNAVERHRKKKINAGINRIGELIPCSPALKQSKNMILDQAFKYITEL). Residues 77–112 (LLNGGNNEQAEEIKKLRKQLEEIQKENGRYIELLKA) adopt a coiled-coil conformation. Disordered stretches follow at residues 271 to 290 (LHTC…QENP), 447 to 470 (SQTP…TSNH), 881 to 900 (SKSK…VTSE), 906 to 933 (AAKS…ALSD), 1015 to 1041 (KNPQ…IVDS), 1164 to 1238 (PSEA…SITS), 1307 to 1331 (IPNS…AKRA), 1460 to 1624 (IKQQ…VSGH), 1636 to 1664 (LEQQ…ERNR), 1736 to 1764 (TFKP…GNPV), 1777 to 1815 (ISQN…ENTC), 1834 to 1859 (GSQR…YNCP), and 1891 to 2031 (STLN…QPAT). Residues 273–288 (TCLNDQNSSENKNGQE) are compositionally biased toward polar residues. Positions 881 to 896 (SKSKSAEKSSPPSQES) are enriched in low complexity. Over residues 912–925 (STPNLQQETSQDKP) the composition is skewed to polar residues. 2 stretches are compositionally biased toward polar residues: residues 1185-1202 (GTGQ…QGSI) and 1219-1238 (IKTS…SITS). Basic and acidic residues predominate over residues 1319-1331 (PSHESRKDSAKRA). The segment covering 1462–1478 (QQQQQQQQQQQQQQQQQ) has biased composition (low complexity). Composition is skewed to polar residues over residues 1501-1520 (SVHS…QEVQ) and 1528-1538 (VQGTQTSQLSL). Residues 1560 to 1569 (QQMQQQMQQH) show a composition bias toward low complexity. The span at 1570–1585 (FGSSQTEKSCENPSTS) shows a compositional bias: polar residues. The span at 1593-1624 (QNHLNQDIMHQQQDVGSRQQGSGVSSEHVSGH) shows a compositional bias: low complexity. A compositionally biased stretch (polar residues) spans 1636–1654 (LEQQMVSQPSIVTRSSDMT). Polar residues-rich tracts occupy residues 1904 to 1923 (GDIQ…SNPM) and 1998 to 2007 (SGNQRQSTVF).

It localises to the nucleus. Involved in the negative regulation of epithelial-mesenchymal transition, the process by which epithelial cells lose their polarity and adhesion properties to become mesenchymal cells with enhanced migration and invasive properties. The protein is Basic helix-loop-helix domain-containing protein USF3 of Homo sapiens (Human).